Here is a 214-residue protein sequence, read N- to C-terminus: Protein DMP6 (214 aa).

Transmembrane regions (helical) follow at residues 52-72, 83-103, 143-163, and 178-198; these read LANL…PICT, FMTA…SFTD, FIDF…VLFD, and VVEL…MVFA.

Belongs to the plant DMP1 protein family. Expressed constitutively in leaves, stems, flowers, siliques and roots (e.g. root hairs).

The protein localises to the vacuole membrane. Involved in membrane remodeling. The polypeptide is Protein DMP6 (Arabidopsis thaliana (Mouse-ear cress)).